The primary structure comprises 619 residues: UvrABC system protein C (619 aa).

The GIY-YIG domain maps to 20–98 (TAPGVYRMYA…IKSLSPRYNV (79 aa)). Positions 207–242 (DQLGEEIMHSMQQASEALEFERAARLRDLLSSLRSM) constitute a UVR domain.

Belongs to the UvrC family. As to quaternary structure, interacts with UvrB in an incision complex.

It localises to the cytoplasm. Its function is as follows. The UvrABC repair system catalyzes the recognition and processing of DNA lesions. UvrC both incises the 5' and 3' sides of the lesion. The N-terminal half is responsible for the 3' incision and the C-terminal half is responsible for the 5' incision. In Xanthomonas euvesicatoria pv. vesicatoria (strain 85-10) (Xanthomonas campestris pv. vesicatoria), this protein is UvrABC system protein C.